The chain runs to 258 residues: Phycoerythrobilin:ferredoxin oxidoreductase (258 aa).

Belongs to the HY2 family.

The enzyme catalyses (3Z)-phycoerythrobilin + oxidized 2[4Fe-4S]-[ferredoxin] = 15,16-dihydrobiliverdin + reduced 2[4Fe-4S]-[ferredoxin] + 2 H(+). Catalyzes the two-electron reduction of the C2 and C3(1) diene system of 15,16-dihydrobiliverdin. This chain is Phycoerythrobilin:ferredoxin oxidoreductase, found in Prochlorococcus marinus (strain NATL2A).